The primary structure comprises 61 residues: Large ribosomal subunit protein uL30 (61 aa).

Belongs to the universal ribosomal protein uL30 family. Part of the 50S ribosomal subunit.

The protein is Large ribosomal subunit protein uL30 of Petrotoga mobilis (strain DSM 10674 / SJ95).